Here is a 264-residue protein sequence, read N- to C-terminus: PDZ domain-containing protein 9 (264 aa).

One can recognise a PDZ domain in the interval 30–109; sequence QTKLTVGSLG…GTVLQIKVYR (80 aa).

This Homo sapiens (Human) protein is PDZ domain-containing protein 9 (PDZD9).